A 196-amino-acid polypeptide reads, in one-letter code: Probable thymidylate kinase (196 aa).

7–14 is a binding site for ATP; sequence GIDGAGKT.

It belongs to the thymidylate kinase family.

It catalyses the reaction dTMP + ATP = dTDP + ADP. The polypeptide is Probable thymidylate kinase (tmk) (Archaeoglobus fulgidus (strain ATCC 49558 / DSM 4304 / JCM 9628 / NBRC 100126 / VC-16)).